Here is a 595-residue protein sequence, read N- to C-terminus: D-xylonate dehydratase (595 aa).

Cys64 contributes to the [2Fe-2S] cluster binding site. Position 96 (Glu96) interacts with Mg(2+). Cys132 is a binding site for [2Fe-2S] cluster. Asp133 lines the Mg(2+) pocket. Cys205 contributes to the [2Fe-2S] cluster binding site. Glu467 serves as a coordination point for Mg(2+).

Belongs to the IlvD/Edd family. As to quaternary structure, homotetramer. The cofactor is [2Fe-2S] cluster. Mg(2+) is required as a cofactor.

It catalyses the reaction D-xylonate = 2-dehydro-3-deoxy-D-arabinonate + H2O. It carries out the reaction D-gluconate = 2-dehydro-3-deoxy-D-gluconate + H2O. The protein operates within carbohydrate metabolism; D-xylose degradation. In terms of biological role, catalyzes the dehydration of D-xylonate to 2-dehydro-3-deoxy-D-arabinonate during D-xylose degradation. Can also dehydrate D-gluconate, with similar catalytic efficiency. Has weak activity with D-galactonate, D-fuconate and L-arabinonate. This Caulobacter vibrioides (strain ATCC 19089 / CIP 103742 / CB 15) (Caulobacter crescentus) protein is D-xylonate dehydratase.